The primary structure comprises 386 residues: MSVIKMTDLDLAGKRVFIRADLNVPVKDGKVTSDARIRATIPTLKLALEKGAKVMVTSHLGRPTEGEFKPEDSLQPVVDYLKNAGFNVRLEQDYLNGVDVKDGEIVVLENVRVNKGEKKNDPELGKKYAALCDVFVMDAFGTAHRAQASTYGVAEFAPIACAGPLLAAELDALGKALKEPARPMVAIVGGSKVSTKLEVLNSLSKIADQIIVGGGIANTFIAAAGHNVGKSLYEADLIPVAKELAANTDIPVPVDVRVGLEFSETATATEKAVNEVKDDESIFDIGDKSAEQLAEIIKNAKTVLWNGPVGVFEFPHFRKGTEIISHAIANSDAFSIAGGGDTLAAIDLFGIADKISYISTGGGAFLEFVEGKVLPAVEILEKRAKN.

Substrate contacts are provided by residues 21–23 (DLN), Arg-36, 59–62 (HLGR), Arg-112, and Arg-145. Residues Lys-196, Glu-313, and 339–342 (GGDT) each bind ATP.

This sequence belongs to the phosphoglycerate kinase family. As to quaternary structure, monomer.

It is found in the cytoplasm. The enzyme catalyses (2R)-3-phosphoglycerate + ATP = (2R)-3-phospho-glyceroyl phosphate + ADP. It participates in carbohydrate degradation; glycolysis; pyruvate from D-glyceraldehyde 3-phosphate: step 2/5. This chain is Phosphoglycerate kinase, found in Haemophilus influenzae (strain PittGG).